A 552-amino-acid polypeptide reads, in one-letter code: CTP synthase (552 aa).

Positions 1–273 (MSESKKNPET…LTPIARRFNM (273 aa)) are amidoligase domain. CTP is bound at residue Ser21. UTP is bound at residue Ser21. ATP contacts are provided by residues 22–27 (SLGKGI) and Asp79. Asp79 and Glu147 together coordinate Mg(2+). CTP is bound by residues 154-156 (DIE), 194-199 (KTKPTQ), and Lys230. UTP contacts are provided by residues 194–199 (KTKPTQ) and Lys230. The 251-residue stretch at 298-548 (TIAFVGKYLS…IQKSLELKKV (251 aa)) folds into the Glutamine amidotransferase type-1 domain. An L-glutamine-binding site is contributed by Gly359. Cys386 acts as the Nucleophile; for glutamine hydrolysis in catalysis. L-glutamine is bound by residues 387–390 (LGMQ), Glu410, and Arg478. Residues His521 and Glu523 contribute to the active site.

This sequence belongs to the CTP synthase family. As to quaternary structure, homotetramer.

It catalyses the reaction UTP + L-glutamine + ATP + H2O = CTP + L-glutamate + ADP + phosphate + 2 H(+). It carries out the reaction L-glutamine + H2O = L-glutamate + NH4(+). The catalysed reaction is UTP + NH4(+) + ATP = CTP + ADP + phosphate + 2 H(+). Its pathway is pyrimidine metabolism; CTP biosynthesis via de novo pathway; CTP from UDP: step 2/2. Allosterically activated by GTP, when glutamine is the substrate; GTP has no effect on the reaction when ammonia is the substrate. The allosteric effector GTP functions by stabilizing the protein conformation that binds the tetrahedral intermediate(s) formed during glutamine hydrolysis. Inhibited by the product CTP, via allosteric rather than competitive inhibition. Its function is as follows. Catalyzes the ATP-dependent amination of UTP to CTP with either L-glutamine or ammonia as the source of nitrogen. Regulates intracellular CTP levels through interactions with the four ribonucleotide triphosphates. This chain is CTP synthase, found in Wolinella succinogenes (strain ATCC 29543 / DSM 1740 / CCUG 13145 / JCM 31913 / LMG 7466 / NCTC 11488 / FDC 602W) (Vibrio succinogenes).